Consider the following 693-residue polypeptide: Elongation factor G (693 aa).

Residues 8–284 (DMTRNVGIMA…AIVNYMPAPT (277 aa)) form the tr-type G domain. Residues 17–24 (AHIDAGKT), 81–85 (DTPGH), and 135–138 (NKMD) each bind GTP.

This sequence belongs to the TRAFAC class translation factor GTPase superfamily. Classic translation factor GTPase family. EF-G/EF-2 subfamily.

The protein resides in the cytoplasm. In terms of biological role, catalyzes the GTP-dependent ribosomal translocation step during translation elongation. During this step, the ribosome changes from the pre-translocational (PRE) to the post-translocational (POST) state as the newly formed A-site-bound peptidyl-tRNA and P-site-bound deacylated tRNA move to the P and E sites, respectively. Catalyzes the coordinated movement of the two tRNA molecules, the mRNA and conformational changes in the ribosome. The protein is Elongation factor G of Fusobacterium nucleatum subsp. nucleatum (strain ATCC 25586 / DSM 15643 / BCRC 10681 / CIP 101130 / JCM 8532 / KCTC 2640 / LMG 13131 / VPI 4355).